A 279-amino-acid chain; its full sequence is 4-diphosphocytidyl-2-C-methyl-D-erythritol kinase (279 aa).

K9 is an active-site residue. 92-102 (PLAAGLGGGSS) contacts ATP. D134 is a catalytic residue.

This sequence belongs to the GHMP kinase family. IspE subfamily.

The catalysed reaction is 4-CDP-2-C-methyl-D-erythritol + ATP = 4-CDP-2-C-methyl-D-erythritol 2-phosphate + ADP + H(+). It functions in the pathway isoprenoid biosynthesis; isopentenyl diphosphate biosynthesis via DXP pathway; isopentenyl diphosphate from 1-deoxy-D-xylulose 5-phosphate: step 3/6. Its function is as follows. Catalyzes the phosphorylation of the position 2 hydroxy group of 4-diphosphocytidyl-2C-methyl-D-erythritol. The polypeptide is 4-diphosphocytidyl-2-C-methyl-D-erythritol kinase (Syntrophus aciditrophicus (strain SB)).